Reading from the N-terminus, the 58-residue chain is Large ribosomal subunit protein eL37 (58 aa).

Zn(2+) contacts are provided by Cys20, Cys23, Cys35, and Cys38. The segment at Cys20 to Cys38 adopts a C4-type zinc-finger fold. A disordered region spans residues Gly39–Asn58.

Belongs to the eukaryotic ribosomal protein eL37 family. Zn(2+) serves as cofactor.

Binds to the 23S rRNA. This chain is Large ribosomal subunit protein eL37, found in Halorubrum lacusprofundi (strain ATCC 49239 / DSM 5036 / JCM 8891 / ACAM 34).